Consider the following 309-residue polypeptide: Oxygen-dependent coproporphyrinogen-III oxidase (309 aa).

S94 contributes to the substrate binding site. Residues H98 and H108 each coordinate a divalent metal cation. H108 serves as the catalytic Proton donor. 110 to 112 is a substrate binding site; it reads NVR. A divalent metal cation contacts are provided by H147 and H177. The segment at 242 to 277 is important for dimerization; it reads YVEFNLVWDRGTLFGLQTGGRTESILMSLPPLVRWE. Position 260-262 (260-262) interacts with substrate; the sequence is GGR.

The protein belongs to the aerobic coproporphyrinogen-III oxidase family. As to quaternary structure, homodimer. A divalent metal cation serves as cofactor.

It is found in the cytoplasm. The catalysed reaction is coproporphyrinogen III + O2 + 2 H(+) = protoporphyrinogen IX + 2 CO2 + 2 H2O. Its pathway is porphyrin-containing compound metabolism; protoporphyrin-IX biosynthesis; protoporphyrinogen-IX from coproporphyrinogen-III (O2 route): step 1/1. Functionally, involved in the heme biosynthesis. Catalyzes the aerobic oxidative decarboxylation of propionate groups of rings A and B of coproporphyrinogen-III to yield the vinyl groups in protoporphyrinogen-IX. The sequence is that of Oxygen-dependent coproporphyrinogen-III oxidase from Yersinia pestis bv. Antiqua (strain Antiqua).